A 299-amino-acid chain; its full sequence is Probable lipid kinase YegS (299 aa).

The DAGKc domain occupies 2-133; it reads AEFPASLLIL…IDMAQVNKQT (132 aa). ATP is bound by residues T40, 66-72, and T95; that span reads GDGTINE. Residues L215, D218, and L220 each contribute to the Mg(2+) site. E271 (proton acceptor) is an active-site residue.

It belongs to the diacylglycerol/lipid kinase family. YegS lipid kinase subfamily. It depends on Mg(2+) as a cofactor. Requires Ca(2+) as cofactor.

It is found in the cytoplasm. Functionally, probably phosphorylates lipids; the in vivo substrate is unknown. This chain is Probable lipid kinase YegS, found in Shigella dysenteriae serotype 1 (strain Sd197).